The chain runs to 296 residues: Iron-sulfur cluster carrier protein (296 aa).

Residues 1-17 (MSSNPFRIQNPQPQPQR) show a composition bias toward low complexity. Residues 1-23 (MSSNPFRIQNPQPQPQRQPRDLR) are disordered. 52–59 (GKGGVGKS) provides a ligand contact to ATP.

Belongs to the Mrp/NBP35 ATP-binding proteins family. As to quaternary structure, homodimer.

In terms of biological role, binds and transfers iron-sulfur (Fe-S) clusters to target apoproteins. Can hydrolyze ATP. This chain is Iron-sulfur cluster carrier protein, found in Saccharolobus solfataricus (strain ATCC 35092 / DSM 1617 / JCM 11322 / P2) (Sulfolobus solfataricus).